The chain runs to 399 residues: Phosphoglycerate kinase (399 aa).

Substrate is bound by residues 22 to 24, arginine 38, 61 to 64, arginine 120, and arginine 153; these read DFN and HLGR. Residues lysine 204, glutamate 326, and 352 to 355 contribute to the ATP site; that span reads GGDT.

It belongs to the phosphoglycerate kinase family. Monomer.

The protein resides in the cytoplasm. The catalysed reaction is (2R)-3-phosphoglycerate + ATP = (2R)-3-phospho-glyceroyl phosphate + ADP. Its pathway is carbohydrate degradation; glycolysis; pyruvate from D-glyceraldehyde 3-phosphate: step 2/5. This is Phosphoglycerate kinase from Citrifermentans bemidjiense (strain ATCC BAA-1014 / DSM 16622 / JCM 12645 / Bem) (Geobacter bemidjiensis).